A 288-amino-acid chain; its full sequence is Small ribosomal subunit protein uS2 (288 aa).

A disordered region spans residues 228-288 (RAGLSSDKDA…PAAEAPSTEA (61 aa)). Low complexity predominate over residues 257 to 288 (QAAPAAEAAPAAEAQAAPAAEAPAAEAPSTEA).

The protein belongs to the universal ribosomal protein uS2 family.

The sequence is that of Small ribosomal subunit protein uS2 from Rhodococcus opacus (strain B4).